We begin with the raw amino-acid sequence, 413 residues long: Argininosuccinate synthase (413 aa).

ATP is bound by residues 12–20 (AYSGGLDTS) and A39. Positions 92 and 97 each coordinate L-citrulline. G122 lines the ATP pocket. L-aspartate contacts are provided by T124, N128, and D129. Residue N128 participates in L-citrulline binding. 5 residues coordinate L-citrulline: R132, S189, S198, E274, and Y286.

Belongs to the argininosuccinate synthase family. Type 1 subfamily. Homotetramer.

The protein localises to the cytoplasm. It catalyses the reaction L-citrulline + L-aspartate + ATP = 2-(N(omega)-L-arginino)succinate + AMP + diphosphate + H(+). The protein operates within amino-acid biosynthesis; L-arginine biosynthesis; L-arginine from L-ornithine and carbamoyl phosphate: step 2/3. In Aliarcobacter butzleri (strain RM4018) (Arcobacter butzleri), this protein is Argininosuccinate synthase.